The following is a 384-amino-acid chain: Monomeric sarcosine oxidase (384 aa).

6 to 36 (DVIVIGLGGMGSAAAHHLSARGARVLGLEKF) is an FAD binding site. Residue C315 is modified to S-8alpha-FAD cysteine.

This sequence belongs to the MSOX/MTOX family. MSOX subfamily. As to quaternary structure, monomer. FAD serves as cofactor.

The protein resides in the cytoplasm. It carries out the reaction sarcosine + O2 + H2O = formaldehyde + glycine + H2O2. In terms of biological role, catalyzes the oxidative demethylation of sarcosine. This chain is Monomeric sarcosine oxidase, found in Streptomyces avermitilis (strain ATCC 31267 / DSM 46492 / JCM 5070 / NBRC 14893 / NCIMB 12804 / NRRL 8165 / MA-4680).